Here is a 5289-residue protein sequence, read N- to C-terminus: Mucin-2 (5289 aa).

The first 20 residues, 1-20 (MGLPLARLAAVCLALSLAGG), serve as a signal peptide directing secretion. Residue serine 21 is modified to Phosphoserine. Histidine 34 lines the Cu(2+) pocket. In terms of domain architecture, VWFD 1 spans 35 to 207 (NVCSTWGNFH…KINQPDVVCE (173 aa)). 29 disulfides stabilise this stretch: cysteine 37-cysteine 169, cysteine 59-cysteine 206, cysteine 67-cysteine 166, cysteine 218-cysteine 255, cysteine 225-cysteine 250, cysteine 237-cysteine 275, cysteine 257-cysteine 263, cysteine 265-cysteine 291, cysteine 295-cysteine 329, cysteine 308-cysteine 321, cysteine 312-cysteine 351, cysteine 331-cysteine 345, cysteine 353-cysteine 375, cysteine 370-cysteine 387, cysteine 373-cysteine 382, cysteine 391-cysteine 528, cysteine 413-cysteine 563, cysteine 435-cysteine 443, cysteine 574-cysteine 619, cysteine 588-cysteine 614, cysteine 601-cysteine 639, cysteine 621-cysteine 627, cysteine 629-cysteine 654, cysteine 661-cysteine 698, cysteine 674-cysteine 688, cysteine 678-cysteine 718, cysteine 700-cysteine 712, cysteine 720-cysteine 742, and cysteine 740-cysteine 749. Aspartate 49 lines the Ca(2+) pocket. Cu(+) is bound by residues methionine 146 and methionine 154. Residue glutamate 156 participates in Cu(2+) binding. N-linked (GlcNAc...) asparagine glycosylation is present at asparagine 163. Residues aspartate 171, asparagine 173, leucine 175, and glutamate 180 each contribute to the Ca(2+) site. Histidine 277 contributes to the Cu(2+) binding site. A TIL domain is found at 295-351 (CPGNLVYLESGSPCMDTCSHLEVSSLCEEHRMDGCFCPEGTVYDDIGDSGCVPVSQC). Histidine 324 contacts Cu(2+). Position 326 (methionine 326) interacts with Cu(+). The region spanning 389 to 564 (GTCALEGGSH…NTWKAQSSCH (176 aa)) is the VWFD 2 domain. Aspartate 403 is a binding site for Ca(2+). Residue asparagine 423 is glycosylated (N-linked (GlcNAc...) asparagine). Residues asparagine 530, asparagine 532, leucine 534, aspartate 537, and aspartate 538 each contribute to the Ca(2+) site. Asparagine 670 is a glycosylation site (N-linked (GlcNAc...) asparagine). Asparagine 770 carries an N-linked (GlcNAc...) asparagine glycan. Cystine bridges form between cysteine 784-cysteine 820, cysteine 802-cysteine 814, cysteine 822-cysteine 844, cysteine 839-cysteine 856, cysteine 842-cysteine 851, cysteine 860-cysteine 992, cysteine 882-cysteine 1027, cysteine 891-cysteine 989, cysteine 909-cysteine 916, cysteine 1037-cysteine 1080, cysteine 1051-cysteine 1075, cysteine 1062-cysteine 1102, cysteine 1082-cysteine 1090, cysteine 1092-cysteine 1117, cysteine 1108-cysteine 1137, cysteine 1121-cysteine 1163, cysteine 1145-cysteine 1187, cysteine 1167-cysteine 1181, cysteine 1189-cysteine 1213, cysteine 1208-cysteine 1238, and cysteine 1211-cysteine 1221. Residues 858-1028 (GTCSIYGSGH…NSWKEAPTCP (171 aa)) enclose the VWFD 3 domain. Aspartate 872 is a binding site for Ca(2+). An N-linked (GlcNAc...) asparagine glycan is attached at asparagine 894. 5 residues coordinate Ca(2+): asparagine 994, aspartate 996, arginine 998, asparagine 1001, and aspartate 1002. N-linked (GlcNAc...) asparagine glycans are attached at residues asparagine 1139 and asparagine 1154. Asparagine 1215, asparagine 1230, and asparagine 1246 each carry an N-linked (GlcNAc...) asparagine glycan. O-linked (GalNAc) threonine glycosylation is found at threonine 1266, threonine 1267, threonine 1269, threonine 1270, threonine 1272, threonine 1275, threonine 1276, threonine 1281, threonine 1282, and threonine 1287. Residues serine 1291 and serine 1292 are each glycosylated (O-linked (GalNAc) serine). Threonine 1293 is a glycosylation site (O-linked (GalNAc) threonine). Serine 1296 is a glycosylation site (O-linked (GalNAc) serine). Threonine 1297 carries an O-linked (GalNAc) threonine glycan. Asparagine 1310, aspartate 1312, histidine 1313, serine 1316, aspartate 1319, glycine 1321, aspartate 1322, glutamate 1324, aspartate 1381, and tyrosine 1382 together coordinate Ca(2+). Pro residues-rich tracts occupy residues 1399 to 1411 (PSPP…PPPT), 1419 to 1510 (TTTP…PITP), 1520 to 1549 (TTTP…PITP), 1559 to 1628 (TTTP…PITP), and 1638 to 1679 (TTTP…PPTT). The interval 1399–1773 (PSPPTTTPSP…SITPPTFSPF (375 aa)) is disordered. Repeat copies occupy residues 1401–1416 (PPTT…TTTL), 1417–1432 (PPTT…TTTP), 1433–1448 (PPTT…TTTP), 1449–1464 (PPTT…TTTP), 1465–1471 (PPTTTPS), and 1472–1478 (PPTTTPS). An approximate repeats region spans residues 1401–1747 (PPTTTPSPPP…SPPTTTMTTL (347 aa)). The 7A repeat unit spans residues 1479–1494 (PPTTTPSPPTTTTTTP). Residues 1495–1517 (PPTTTPSPPTTTPITPPASTTTL) form a 7B repeat. One copy of the 8A repeat lies at 1518–1533 (PPTTTPSPPTTTTTTP). The stretch at 1534–1556 (PPTTTPSPPTTTPITPPTSTTTL) is one 8B repeat. The 9A repeat unit spans residues 1557–1572 (PPTTTPSPPPTTTTTP). Residues 1573 to 1596 (PPTTTPSPPTTTTPSPPTITTTTP) form a 9B repeat. One copy of the 10A repeat lies at 1597 to 1612 (PPTTTPSPPTTTTTTP). The stretch at 1613-1635 (PPTTTPSPPTTTPITPPTSTTTL) is one 10B repeat. One copy of the 11A repeat lies at 1636 to 1651 (PPTTTPSPPPTTTTTP). One copy of the 11B repeat lies at 1652–1675 (PPTTTPSPPTTTTPSPPITTTTTP). Repeat copies occupy residues 1676-1683 (PPTTTPSS), 1684-1699 (PITT…MTTP), 1700-1715 (SPTT…TTTP), 1716-1731 (SSTT…MTTP), and 1732-1747 (SPTT…MTTL). Composition is skewed to low complexity over residues 1680–1720 (TPSS…STTT) and 1741–1759 (TTTM…LTTT). Residues 1760–1770 (PLPPSITPPTF) show a composition bias toward pro residues. Asparagine 1787 and asparagine 1820 each carry an N-linked (GlcNAc...) asparagine glycan. Low complexity-rich tracts occupy residues 1885-2158 (MTTT…TMVT), 2165-4238 (GTQT…QTPT), 4269-4315 (TTVT…STAP), and 4329-4430 (STPQ…PSII). Disordered stretches follow at residues 1885 to 4238 (MTTT…QTPT) and 4269 to 4430 (TTVT…PSII). Residues asparagine 4449, asparagine 4461, asparagine 4472, and asparagine 4483 are each glycosylated (N-linked (GlcNAc...) asparagine). The interval 4492-4524 (PTPTPSKSTPTPSKPSSTPSKPTPGTKPPECPD) is disordered. Residues 4496-4511 (PSKSTPTPSKPSSTPS) show a composition bias toward low complexity. Pro residues predominate over residues 4512–4522 (KPTPGTKPPEC). 3 N-linked (GlcNAc...) asparagine glycosylation sites follow: asparagine 4532, asparagine 4548, and asparagine 4612. The VWFD 4 domain occupies 4589–4772 (CYCTGWGDPH…VNDPSKPHCP (184 aa)). Disulfide bonds link cysteine 4591–cysteine 4732, cysteine 4613–cysteine 4771, and cysteine 4637–cysteine 4645. Asparagine 4726 and asparagine 4737 each carry an N-linked (GlcNAc...) asparagine glycan. The tract at residues 4770 to 4795 (HCPHSSSTTKRPAVTVPGGGKTTPHK) is disordered. N-linked (GlcNAc...) asparagine glycosylation is found at asparagine 4862, asparagine 4897, asparagine 4991, asparagine 4998, asparagine 5065, asparagine 5080, asparagine 5129, asparagine 5148, and asparagine 5179. Residues 4927–4996 (CVGPDNVPRE…DTCCNITVCK (70 aa)) enclose the VWFC 1 domain. The VWFC 2 domain maps to 5034 to 5101 (GVCVHGNAEY…APGECCKKCE (68 aa)). Cystine bridges form between cysteine 5185–cysteine 5232, cysteine 5199–cysteine 5246, cysteine 5208–cysteine 5262, and cysteine 5212–cysteine 5264. The 86-residue stretch at 5185–5270 (CSTVPVTTEV…SCQCQDTVCG (86 aa)) folds into the CTCK domain.

In terms of assembly, homomultimer; disulfide-linked. The N- and C-terminus mediate their assembly into higher order structures to form filaments. The CTCK domains of two polypeptides associate in the endoplasmic reticulum to generate intermolecularly disulfide-bonded dimers. These dimers progress to the Golgi apparatus, which is a more acidic environment than the endoplasmic reticulum. Under acidic conditions, the N-termini form non-covalent intermolecular interactions that juxtapose assemblies of the third VWD domain (VWD3) from different CTCK-linked dimers. The VWD3 assemblies then become disulfide bonded to one another to produce long, disulfide-linked polymers that remain highly compact until secretion. Interacts with FCGBP. Interacts with AGR2; disulfide-linked. (Microbial infection) Interacts in vitro with L.monocytogenes internalin proteins InlB, InlC and InlJ; for InlC binding is slightly better at pH 5.5, (the pH of the intestine) than at pH 7.4. O-glycosylated. O-glycosylation is required for mucin assembly. Goblet cells synthesize two forms of mucin that differ in branched chain O-glycosylation and the site of production in the colon. Post-translationally, may undergo proteolytic cleavage in the outer mucus layer of the colon, contributing to the expanded volume and loose nature of this layer which allows for bacterial colonization in contrast to the inner mucus layer which is dense and devoid of bacteria. In terms of processing, at low pH of 6 and under, undergoes autocatalytic cleavage in vitro in the N-terminal region of the fourth VWD domain. It is likely that this also occurs in vivo and is triggered by the low pH of the late secretory pathway. In terms of tissue distribution, colon, small intestine, colonic tumors, bronchus, cervix and gall bladder.

The protein localises to the secreted. Functionally, coats the epithelia of the intestines and other mucus membrane-containing organs to provide a protective, lubricating barrier against particles and infectious agents at mucosal surfaces. Major constituent of the colon mucus, which is mainly formed by large polymeric networks of MUC2 secreted by goblet cells that cover the exposed surfaces of intestine. MUC2 networks form hydrogels that guard the underlying epithelium from pathogens and other hazardous matter entering from the outside world, while permitting nutrient absorption and gas exchange. Acts as a divalent copper chaperone that protects intestinal cells from copper toxicity and facilitates nutritional copper unptake into cells. Binds both Cu(2+) and its reduced form, Cu(1+), at two juxtaposed binding sites: Cu(2+), once reduced to Cu(1+) by vitamin C (ascorbate) or other dietary antioxidants, transits to the other binding site. MUC2-bound Cu(1+) is protected from oxidation in aerobic environments, and can be released for nutritional delivery to cells. Mucin gels store antimicrobial molecules that participate in innate immunity. Mucin glycoproteins also house and feed the microbiome, lubricate tissue surfaces, and may facilitate the removal of contaminants and waste products from the body. Goblet cells synthesize two forms of MUC2 mucin that differ in branched chain O-glycosylation and the site of production in the colon: a (1) 'thick' mucus that wraps the microbiota to form fecal pellets is produced in the proximal, ascending colon. 'Thick' mucus transits along the descending colon and is lubricated by a (2) 'thin' MUC2 mucus produced in the distal colon which adheres to the 'thick' mucus. In Homo sapiens (Human), this protein is Mucin-2.